The following is a 129-amino-acid chain: Small ribosomal subunit protein uS11 (129 aa).

The protein belongs to the universal ribosomal protein uS11 family. Part of the 30S ribosomal subunit. Interacts with proteins S7 and S18. Binds to IF-3.

Its function is as follows. Located on the platform of the 30S subunit, it bridges several disparate RNA helices of the 16S rRNA. Forms part of the Shine-Dalgarno cleft in the 70S ribosome. The protein is Small ribosomal subunit protein uS11 of Lysinibacillus sphaericus (strain C3-41).